Here is a 177-residue protein sequence, read N- to C-terminus: Large ribosomal subunit protein uL6 (177 aa).

The protein belongs to the universal ribosomal protein uL6 family. In terms of assembly, part of the 50S ribosomal subunit.

Its function is as follows. This protein binds to the 23S rRNA, and is important in its secondary structure. It is located near the subunit interface in the base of the L7/L12 stalk, and near the tRNA binding site of the peptidyltransferase center. This is Large ribosomal subunit protein uL6 from Yersinia pseudotuberculosis serotype O:1b (strain IP 31758).